The chain runs to 960 residues: Probable RNA-binding protein 19 (960 aa).

Positions 2-79 (SRLIVKNLPN…SRITVEFCKS (78 aa)) constitute an RRM 1 domain. Disordered stretches follow at residues 85–119 (KPRA…KKKK) and 149–294 (WAND…TTCH). Phosphoserine is present on residues Ser174, Ser176, and Ser180. The span at 176 to 194 (SGQESEEEGAGEDLEEEAS) shows a compositional bias: acidic residues. Over residues 273 to 286 (RPPEARAETEKPAN) the composition is skewed to basic and acidic residues. RRM domains are found at residues 294–369 (HTVK…REKN) and 402–480 (GRLF…PSTI). A Glycyl lysine isopeptide (Lys-Gly) (interchain with G-Cter in SUMO2) cross-link involves residue Lys481. The interval 491 to 513 (LGSSSYKKKKEAQDKANSASSHN) is disordered. An RRM 4 domain is found at 587–659 (TVILVKNLPA…VPLYLEWAPV (73 aa)). Residues 667 to 729 (PQKKKLQDTP…EEEEEESLPG (63 aa)) are disordered. 2 stretches are compositionally biased toward acidic residues: residues 689–706 (TVPD…EEGA) and 714–726 (EEEE…EEES). 2 RRM domains span residues 730-811 (CTLF…ISER) and 832-912 (SKIL…WADS). Ser936, Ser949, and Ser951 each carry phosphoserine.

It belongs to the RRM MRD1 family. As to expression, expressed in the crypts of Lieberkuhn of the intestine and in intestinal neoplasia (at protein level).

It localises to the nucleus. It is found in the nucleolus. The protein localises to the nucleoplasm. The protein resides in the cytoplasm. Its subcellular location is the chromosome. Its function is as follows. Plays a role in embryo pre-implantation development. The sequence is that of Probable RNA-binding protein 19 (RBM19) from Homo sapiens (Human).